A 550-amino-acid chain; its full sequence is CTP synthase (550 aa).

Residues methionine 1 to methionine 271 form an amidoligase domain region. Serine 13 lines the CTP pocket. Serine 13 is a UTP binding site. Serine 14–leucine 19 is a binding site for ATP. Tyrosine 54 provides a ligand contact to L-glutamine. Aspartate 71 is a binding site for ATP. The Mg(2+) site is built by aspartate 71 and glutamate 145. Residues aspartate 152 to glutamate 154, lysine 192 to glutamine 197, and lysine 228 each bind CTP. Residues lysine 192 to glutamine 197 and lysine 228 each bind UTP. One can recognise a Glutamine amidotransferase type-1 domain in the interval threonine 297 to leucine 549. Glycine 361 lines the L-glutamine pocket. The active-site Nucleophile; for glutamine hydrolysis is cysteine 388. Residues phenylalanine 389 to glutamine 392, glutamate 412, and arginine 477 each bind L-glutamine. Active-site residues include histidine 522 and glutamate 524.

Belongs to the CTP synthase family. In terms of assembly, homotetramer.

The catalysed reaction is UTP + L-glutamine + ATP + H2O = CTP + L-glutamate + ADP + phosphate + 2 H(+). It catalyses the reaction L-glutamine + H2O = L-glutamate + NH4(+). It carries out the reaction UTP + NH4(+) + ATP = CTP + ADP + phosphate + 2 H(+). It participates in pyrimidine metabolism; CTP biosynthesis via de novo pathway; CTP from UDP: step 2/2. With respect to regulation, allosterically activated by GTP, when glutamine is the substrate; GTP has no effect on the reaction when ammonia is the substrate. The allosteric effector GTP functions by stabilizing the protein conformation that binds the tetrahedral intermediate(s) formed during glutamine hydrolysis. Inhibited by the product CTP, via allosteric rather than competitive inhibition. In terms of biological role, catalyzes the ATP-dependent amination of UTP to CTP with either L-glutamine or ammonia as the source of nitrogen. Regulates intracellular CTP levels through interactions with the four ribonucleotide triphosphates. The polypeptide is CTP synthase (Caulobacter vibrioides (strain ATCC 19089 / CIP 103742 / CB 15) (Caulobacter crescentus)).